The following is a 145-amino-acid chain: D-aminoacyl-tRNA deacylase (145 aa).

The Gly-cisPro motif, important for rejection of L-amino acids signature appears at 137 to 138; that stretch reads GP.

Belongs to the DTD family. In terms of assembly, homodimer.

It is found in the cytoplasm. The enzyme catalyses glycyl-tRNA(Ala) + H2O = tRNA(Ala) + glycine + H(+). It catalyses the reaction a D-aminoacyl-tRNA + H2O = a tRNA + a D-alpha-amino acid + H(+). An aminoacyl-tRNA editing enzyme that deacylates mischarged D-aminoacyl-tRNAs. Also deacylates mischarged glycyl-tRNA(Ala), protecting cells against glycine mischarging by AlaRS. Acts via tRNA-based rather than protein-based catalysis; rejects L-amino acids rather than detecting D-amino acids in the active site. By recycling D-aminoacyl-tRNA to D-amino acids and free tRNA molecules, this enzyme counteracts the toxicity associated with the formation of D-aminoacyl-tRNA entities in vivo and helps enforce protein L-homochirality. This chain is D-aminoacyl-tRNA deacylase, found in Photorhabdus laumondii subsp. laumondii (strain DSM 15139 / CIP 105565 / TT01) (Photorhabdus luminescens subsp. laumondii).